The chain runs to 123 residues: U11/U12 small nuclear ribonucleoprotein 25 kDa protein (123 aa).

One can recognise a Ubiquitin-like domain in the interval 32–123 (MTVRVCKMDG…VSFIKKLRQK (92 aa)).

As to quaternary structure, component of the U11/U12 snRNPs that are part of the U12-type spliceosome.

It localises to the nucleus. This Bos taurus (Bovine) protein is U11/U12 small nuclear ribonucleoprotein 25 kDa protein (SNRNP25).